We begin with the raw amino-acid sequence, 1038 residues long: Eukaryotic translation initiation factor 3 subunit A (1038 aa).

Residues 92-121 are a coiled coil; it reads LKKFIELAEKKVTEAQAKADEIQSSLESAA. The PCI domain maps to 339-523; it reads MTKAVSFVLL…GVLTFDTDVF (185 aa). Residues 611 to 899 are a coiled coil; that stretch reads IDKKKEAATD…QKQREEEAEA (289 aa). Basic and acidic residues-rich tracts occupy residues 621 to 632 and 800 to 901; these read ALQRKQREEETR and RHEE…EARR. Disordered regions lie at residues 621-641 and 800-1038; these read ALQR…QQLQ and RHEE…QQGQ. Composition is skewed to low complexity over residues 943 to 952 and 976 to 993; these read KEAAGGAAPE and GASA…AAPS. Residues 1002-1019 show a composition bias toward polar residues; sequence DSGSSTPPSRTQTPATTS.

This sequence belongs to the eIF-3 subunit A family. Component of the eukaryotic translation initiation factor 3 (eIF-3) complex.

The protein resides in the cytoplasm. Functionally, RNA-binding component of the eukaryotic translation initiation factor 3 (eIF-3) complex, which is involved in protein synthesis of a specialized repertoire of mRNAs and, together with other initiation factors, stimulates binding of mRNA and methionyl-tRNAi to the 40S ribosome. The eIF-3 complex specifically targets and initiates translation of a subset of mRNAs involved in cell proliferation. The protein is Eukaryotic translation initiation factor 3 subunit A (tif32) of Aspergillus oryzae (strain ATCC 42149 / RIB 40) (Yellow koji mold).